The primary structure comprises 218 residues: MAFKDTFNKMISYFDTDEVNEVEEDVTASTDNVIPRSQQSVRASSHPKQEPRNNHVQQDHQARSQEQTRSQMHPKHGTSERYYQQSQPKEGHEMVDRRKRMSTSGIANRREQYQQSTCSDQTTIALKYPRKYEDAQEIVDLLIVNECVLIDFQFMLDAQARRCLDFIDGASKVLYGSLQKVGSSMYLLAPSNVSVNIEEMTIPHTTQDIGFDFDMKRR.

The segment at 24–115 is disordered; the sequence is EDVTASTDNV…IANRREQYQQ (92 aa). Residues 28 to 43 show a composition bias toward polar residues; it reads ASTDNVIPRSQQSVRA. Over residues 47–63 the composition is skewed to basic and acidic residues; that stretch reads PKQEPRNNHVQQDHQAR.

This sequence belongs to the SepF family. As to quaternary structure, homodimer. Interacts with FtsZ.

Its subcellular location is the cytoplasm. In terms of biological role, cell division protein that is part of the divisome complex and is recruited early to the Z-ring. Probably stimulates Z-ring formation, perhaps through the cross-linking of FtsZ protofilaments. Its function overlaps with FtsA. The protein is Cell division protein SepF of Streptococcus pyogenes serotype M4 (strain MGAS10750).